We begin with the raw amino-acid sequence, 342 residues long: Epoxide hydrolase srdG (342 aa).

Residues 44–332 (ATVLLLHGWP…LIHTPEEVNK (289 aa)) enclose the AB hydrolase-1 domain. The Nucleophile role is filled by Asp-122. His-320 acts as the Proton acceptor in catalysis.

Belongs to the AB hydrolase superfamily. Epoxide hydrolase family.

In terms of biological role, highly reducing polyketide synthase; part of the gene cluster that mediates the biosynthesis of sordarial, a salicylic aldehyde structurally related to the phytotoxin pyriculol. The most interesting aspect of this pathway is formation of an aromatic product from the highly reducing polyketide synthase srdA. SrdA synthesizes a reduced polyketide chain from one molecule of acetyl-CoA and five molecules of malonyl-CoA. The polyketide chain is then reductively released as an aldehyde. The oxidoreductases srdC, srdD and srdE then oxidize one of the hydroxy groups to facilitate the intramolecular aldol condensation, followed by dehydration to yield a salicylic aldehyde. This aldehyde can undergo facile reduction by endogenous reductases to yield the alcohol 1-hydroxy-2-hydroxymethyl-3-pent-1,3-dienylbenzene. The flavin-dependent srdI counteract against the propensity of the aldehydes to be reduced under physiological conditions and is responsible for reoxidizing 1-hydroxy-2-hydroxymethyl-3-pent-1,3-dienylbenzene back to the salicylic aldehyde. This salicylic aldehyde is then selectively epoxidized by the cupin-domain-containing oxidoreductase srdB to yield the epoxide, which can be hydrolyzed stereoselectively by the hydrolase srdG to give the final product sordarial. This Neurospora crassa (strain ATCC 24698 / 74-OR23-1A / CBS 708.71 / DSM 1257 / FGSC 987) protein is Epoxide hydrolase srdG.